A 679-amino-acid chain; its full sequence is Glycine--tRNA ligase beta subunit (679 aa).

This sequence belongs to the class-II aminoacyl-tRNA synthetase family. As to quaternary structure, tetramer of two alpha and two beta subunits.

The protein resides in the cytoplasm. The enzyme catalyses tRNA(Gly) + glycine + ATP = glycyl-tRNA(Gly) + AMP + diphosphate. In Streptococcus mutans serotype c (strain ATCC 700610 / UA159), this protein is Glycine--tRNA ligase beta subunit.